The following is a 158-amino-acid chain: MALFTTGRQFIQDLEKSGALGIYVPSEGGFEGRYQRRLRAAGYSTLHISAPGLGDLPSYLTQVHGVRPPHLGKSTQGNTDWGVKTFFLPPLVNYHLENLPPKARGLVLWMIDGKRLSRQELAYLSILPAQEPKVKIVIELGGDRQFRWQPLKEMAAAA.

This sequence belongs to the complex I NdhN subunit family. NDH-1 can be composed of about 15 different subunits; different subcomplexes with different compositions have been identified which probably have different functions.

It is found in the cellular thylakoid membrane. The catalysed reaction is a plastoquinone + NADH + (n+1) H(+)(in) = a plastoquinol + NAD(+) + n H(+)(out). It carries out the reaction a plastoquinone + NADPH + (n+1) H(+)(in) = a plastoquinol + NADP(+) + n H(+)(out). In terms of biological role, NDH-1 shuttles electrons from an unknown electron donor, via FMN and iron-sulfur (Fe-S) centers, to quinones in the respiratory and/or the photosynthetic chain. The immediate electron acceptor for the enzyme in this species is believed to be plastoquinone. Couples the redox reaction to proton translocation, and thus conserves the redox energy in a proton gradient. Cyanobacterial NDH-1 also plays a role in inorganic carbon-concentration. The chain is NAD(P)H-quinone oxidoreductase subunit N from Cyanothece sp. (strain PCC 7425 / ATCC 29141).